A 122-amino-acid polypeptide reads, in one-letter code: Large ribosomal subunit protein uL24 (122 aa).

Belongs to the universal ribosomal protein uL24 family. Part of the 50S ribosomal subunit.

One of two assembly initiator proteins, it binds directly to the 5'-end of the 23S rRNA, where it nucleates assembly of the 50S subunit. Its function is as follows. One of the proteins that surrounds the polypeptide exit tunnel on the outside of the subunit. The sequence is that of Large ribosomal subunit protein uL24 from Trichodesmium erythraeum (strain IMS101).